The following is a 928-amino-acid chain: Calcium-transporting ATPase 1 (928 aa).

The segment at 1 to 25 (MDSHTSTEGVPLSETNNRSHATPSA) is disordered. 4 consecutive transmembrane segments (helical) span residues 81–101 (FSEN…FFMG), 105–125 (DAIS…VQEY), 271–291 (DLSL…MFQG), and 306–326 (VAAI…LGVL). Asp-353 (4-aspartylphosphate intermediate) is an active-site residue. The next 5 helical transmembrane spans lie at 718–738 (FITF…VATI), 750–770 (ILWI…VEPV), 799–819 (AVII…DGVI), 860–880 (FLYA…VPFL), and 887–907 (EALS…VWIL).

This sequence belongs to the cation transport ATPase (P-type) (TC 3.A.3) family.

Its subcellular location is the golgi apparatus membrane. It catalyses the reaction Ca(2+)(in) + ATP + H2O = Ca(2+)(out) + ADP + phosphate + H(+). In terms of biological role, this magnesium-dependent enzyme catalyzes the hydrolysis of ATP coupled with the transport of calcium. Has a role in the secretory pathway. This Yarrowia lipolytica (strain CLIB 122 / E 150) (Yeast) protein is Calcium-transporting ATPase 1 (PMR1).